The primary structure comprises 745 residues: Heterogeneous nuclear ribonucleoprotein U-like protein 2 (745 aa).

The region spanning 3-37 (VKRLKVTELRSELQRRGLDSRGLKMDLAQRLQEAL) is the SAP domain. Disordered regions lie at residues 44 to 239 (DEAG…DEEE) and 625 to 664 (EEAR…GQRR). Residues 73 to 97 (GDEEEEDDDEEEDEEALLEDEDEEP) are compositionally biased toward acidic residues. Over residues 142 to 161 (GEEHDNGKGEEDGPEERSGD) the composition is skewed to basic and acidic residues. A Phosphoserine modification is found at Ser-159. Residue Thr-163 is modified to Phosphothreonine. Phosphoserine occurs at positions 166, 183, 186, 224, and 226. Positions 183 to 221 (SEKSKPAGSDGERRGVKRQRDEKDEHGRAYYEFREEAYH) are enriched in basic and acidic residues. The 194-residue stretch at 224–417 (SKSPPPPEEE…VELNFGQKEE (194 aa)) folds into the B30.2/SPRY domain. Positions 230–239 (PEEEAKDEEE) are enriched in acidic residues. Positions 625–637 (EEARKLLPPSEKR) are enriched in basic and acidic residues. Residues 638–652 (TNRRNNRNKRNRQNR) are compositionally biased toward basic residues. An omega-N-methylarginine mark is found at Arg-654, Arg-682, Arg-736, and Arg-745.

In terms of assembly, binds to MLF1 and retains it in the nucleus.

It is found in the nucleus. In Mus musculus (Mouse), this protein is Heterogeneous nuclear ribonucleoprotein U-like protein 2 (Hnrnpul2).